Reading from the N-terminus, the 246-residue chain is Transcriptional regulatory protein LytR (246 aa).

The 115-residue stretch at 2–116 (KALIIDDEPL…RIEQAVNKVR (115 aa)) folds into the Response regulatory domain. The residue at position 53 (Asp-53) is a 4-aspartylphosphate. The region spanning 141–245 (LPVEIDDKIH…MKDFKASIGL (105 aa)) is the HTH LytTR-type domain.

Homodimer; when phosphorylated. In terms of processing, phosphorylated and dephosphorylated by LytS.

It is found in the cytoplasm. In terms of biological role, member of the two-component regulatory system LytR/LytS that regulates genes involved in autolysis, programmed cell death, biofilm formation and cell wall metabolism. Also participates in sensing and responding to host defense cationic antimicrobial peptides (HDPs). Upon phosphorylation by LytS, functions as a transcription regulator by direct binding to promoter regions of target genes including lrgA and lrgB, to positively regulate their expression. The sequence is that of Transcriptional regulatory protein LytR (lytR) from Staphylococcus aureus (strain MW2).